A 376-amino-acid polypeptide reads, in one-letter code: Inactive 2'-5'-oligoadenylate synthase 1B (376 aa).

The Cytoplasmic portion of the chain corresponds to 1–351; it reads MEQDLRSIPA…VPTEVGVPMK (351 aa). A helical; Anchor for type IV membrane protein transmembrane segment spans residues 352–370; sequence YLLCRIFWLLFWSLFHFIF. Topologically, residues 371 to 376 are extracellular; sequence GKTSSG.

It belongs to the 2-5A synthase family. As to quaternary structure, interacts with OSBPL1A and ABCF3. As to expression, highly expressed in lung, spleen and thymus. Also detected at lower levels in heart, kidney, liver, lung, skeletal muscle, testes, uterus and ovaries.

The protein resides in the endoplasmic reticulum membrane. Its function is as follows. Does not have 2'-5'-OAS activity, but can bind double-stranded RNA. The full-length protein displays antiviral activity against flaviviruses such as west Nile virus (WNV) via an alternative antiviral pathway independent of RNase L. The truncated form of the protein lacks antiviral activity. The chain is Inactive 2'-5'-oligoadenylate synthase 1B (Oas1b) from Mus musculus (Mouse).